We begin with the raw amino-acid sequence, 449 residues long: Glycosyl hydrolase-like protein 1 (449 aa).

Residues Q22, H119, 164-165 (NE), Y292, E350, W393, and Y406 contribute to the a beta-D-glucoside site. E165 serves as the catalytic Proton donor. The active-site Nucleophile is E350.

It belongs to the glycosyl hydrolase 1 family. In terms of tissue distribution, mainly expressed in flowers, flower buds and young leaves, and, to a lesser extent, in old leaves, stems and roots.

It localises to the cytoplasm. It functions in the pathway secondary metabolite biosynthesis; terpenoid biosynthesis. In terms of biological role, component of the oleanane-type triterpene saponins (e.g. saponarioside A and saponarioside B) biosynthetic pathway, leading to the production of natural products with detergent properties used as traditional sources of soap. Beta-glycosidase that catalyzes the transfer of glucose moiety to QA-triFRXX to produce QA-triF(Q)RXX via the elongation of the C-28 sugar chain with a D-quinovose. This is Glycosyl hydrolase-like protein 1 from Saponaria officinalis (Common soapwort).